The chain runs to 629 residues: MPSTRNIETHNDSNPTLRALSLSALGIVYGDIGTSPLYTFKTVILLAGGGTPDVTTIMGSASLIIWTLIIIASVKYICFALRIDNDGEGGILALMSLLSLKLKQKPFIIAVGLMGAALIYGDGTITPAISVLSAVEGLEILSPSLKYYVLPIAITILITLFAIQSKGTATIGKAFGPVMAFWFLTIGILGAREVIQHPFVLAAINPVYGLNFLFSNGATGFFILCGVFLCVTGAEALYADLGHFGTAPIRCAWFGLAFPSLIFNYLGQAALVLEGASTEHNIFYMLCPSDFLLPLIILSTVATIIASQAIITGAFSMTRQAMQLGWLPRLRVTQTSSEGYGQIYIGVVNWLLMLATLGLIIGFGSSEKLAAAYGIAVSATMLCTSVLLFIALHKLWKWNIIKSGLVAGLFMIVDASFFAANLTKFINGGYIPITLAIIIYSMMYIWHKGYKTIAIKQKEKNITVDSFLDSIQKEGVVRVPKTAVFLTSKEQDIPPTLVWHVKKNHVLQDKVIILNINNLSIPWCKPGDQLQIVETGAGIWHAVANYGFMEQPHIPKLLKKLETQGYDINIKDITYYIGHETIFVRNVRHTLSKYIKILFVFMHRNALPMSNYFHLPPESVFEIGRQIEI.

Helical transmembrane passes span 20 to 40 (LSLS…LYTF), 54 to 74 (VTTI…IASV), 106 to 126 (PFII…GTIT), 143 to 163 (PSLK…LFAI), 171 to 191 (IGKA…ILGA), 212 to 232 (FLFS…LCVT), 253 to 273 (WFGL…ALVL), 291 to 311 (FLLP…QAII), 343 to 363 (IYIG…IIGF), 372 to 392 (AYGI…FIAL), 400 to 420 (IIKS…FFAA), and 425 to 445 (FING…MMYI).

This sequence belongs to the HAK/KUP transporter (TC 2.A.72) family.

The protein resides in the cell inner membrane. The enzyme catalyses K(+)(in) + H(+)(in) = K(+)(out) + H(+)(out). Functionally, transport of potassium into the cell. Likely operates as a K(+):H(+) symporter. This chain is Probable potassium transport system protein Kup 3, found in Legionella pneumophila (strain Corby).